We begin with the raw amino-acid sequence, 164 residues long: Cyclic pyranopterin monophosphate synthase (164 aa).

Substrate-binding positions include 75–77 (MAH) and 112–113 (ME). Residue Asp127 is part of the active site.

It belongs to the MoaC family. Homohexamer; trimer of dimers.

It carries out the reaction (8S)-3',8-cyclo-7,8-dihydroguanosine 5'-triphosphate = cyclic pyranopterin phosphate + diphosphate. It functions in the pathway cofactor biosynthesis; molybdopterin biosynthesis. Its function is as follows. Catalyzes the conversion of (8S)-3',8-cyclo-7,8-dihydroguanosine 5'-triphosphate to cyclic pyranopterin monophosphate (cPMP). The chain is Cyclic pyranopterin monophosphate synthase from Desulforamulus reducens (strain ATCC BAA-1160 / DSM 100696 / MI-1) (Desulfotomaculum reducens).